The following is a 200-amino-acid chain: Methylthioribulose-1-phosphate dehydratase (200 aa).

Residues His-90 and His-92 each contribute to the Zn(2+) site.

This sequence belongs to the aldolase class II family. MtnB subfamily. Requires Zn(2+) as cofactor.

The enzyme catalyses 5-(methylsulfanyl)-D-ribulose 1-phosphate = 5-methylsulfanyl-2,3-dioxopentyl phosphate + H2O. It participates in amino-acid biosynthesis; L-methionine biosynthesis via salvage pathway; L-methionine from S-methyl-5-thio-alpha-D-ribose 1-phosphate: step 2/6. Functionally, catalyzes the dehydration of methylthioribulose-1-phosphate (MTRu-1-P) into 2,3-diketo-5-methylthiopentyl-1-phosphate (DK-MTP-1-P). The chain is Methylthioribulose-1-phosphate dehydratase from Sodalis glossinidius (strain morsitans).